The chain runs to 992 residues: MAVVIRLQGLPIVAGTMDIRHFFSGLTIPDGGVHIVGGELGEAFIVFATDEDARLGMMRTGGTIKGSKVTLLLSSKTEMQNMIELSRRRFETANLDIPPANASRSGPPPSSGMSSRVNLPAIVPNFNNPSPSVVTATTSVHESNKNIQTFSTASVGTAPPSMGTSFGSPTFSSTIPSTASPMNTVPPPPIPPIPAMPSLPPLPSIPPIPVPPPVPTLPPVPPVPPIPPVPSVPPMTTLPPMSGMPPLNPPPVAPLPAGMNGSGAPIGLNNNMNPVFLGPLNPVNSIQMNSQSSVKSLPINPDDLYVSVHGMPFSAMENDVREFFHGLRVDAVHLLKDHVGRNNGNGLVKFLSPQDTFEALKRNRMLMIQRYVEVSPATERQWVAAGGHITFKQSMGPSGQAHPPPQTLPRSKSPSGQKRSRSRSPHEAGFCVYLKGLPFEAENKHVIDFFKKLDIVEDSIYIAYGPNGKATGEGFVEFRNDADYKAALCRHKQYMGNRFIQVHPITKKGMLEKIDMIRKRLQNFSYDQRELVLNPEGEVSSAKVCAHITNIPFSITKMDVLQFLEGIPVDESAVHVLVDNNGQGLGQALVQFKTEDDAHKSEHLHRKKLNGREAFVHIVTLEDMREIEKNPPAQGKKGLKISVPGNPAVPVIPSAGMPAAGIPTAGIPGAGLPSAGMPGAGMPSSGMPGPGMPGPGIPGAGIPGPAMPGPAMPGPAMPGPAMPGPAMPGPAMPGPAMPGPAMPGPAIPGPAIPGPAIPGAGIPSAGGEEHVFLTVGSKEANNGPPFNFPGNFGGPNAFGPPLPPPGLGGAFGDVRPVMPSVGNSGLPGLGLEVPGFGGAPNNISGPSGFGGIPQNFGNGPGSLNAPPGFGSGPPGLGSVPGHLSGPPAFGPGPGPGPIHIGGPPGFGASSGKPGPTIIKVQNMPFTVSIDEILDFFYGYQVIPGSVCLKYNEKGMPTGEAMVAFESRDEATAAVIDLNDRPIGSRKVKLVLG.

Positions 304-379 constitute an RRM 1 domain; it reads LYVSVHGMPF…RYVEVSPATE (76 aa). 2 positions are modified to phosphoserine: S352 and S375. Positions 393-424 are disordered; it reads QSMGPSGQAHPPPQTLPRSKSPSGQKRSRSRS. Residues 408–417 are compositionally biased toward polar residues; sequence LPRSKSPSGQ. Residues S420, S422, and S424 each carry the phosphoserine modification. In terms of domain architecture, RRM 2 spans 430–507; sequence FCVYLKGLPF…RFIQVHPITK (78 aa). The residue at position 525 (S525) is a Phosphoserine. The disordered stretch occupies residues 849-913; that stretch reads FGGIPQNFGN…PGFGASSGKP (65 aa). Residues 876–887 are compositionally biased toward low complexity; that stretch reads LGSVPGHLSGPP. Positions 916–992 constitute an RRM 3 domain; sequence TIIKVQNMPF…GSRKVKLVLG (77 aa).

It is found in the nucleus. The protein is RNA-binding protein 12 (Rbm12) of Mus musculus (Mouse).